We begin with the raw amino-acid sequence, 261 residues long: Yop proteins translocation protein T (261 aa).

7 consecutive transmembrane segments (helical) span residues 20–40 (FMAC…GVLL), 44–64 (IVCS…YIEV), 77–97 (IILG…LESA), 131–151 (TLIT…ALFH), 180–200 (ILLI…LAEF), 214–234 (VFVL…VIYC), and 239–259 (SHAS…IPVL).

Belongs to the FliR/MopE/SpaR family.

The protein localises to the cell membrane. In terms of biological role, component of the yop secretion machinery. This is Yop proteins translocation protein T (yscT) from Yersinia pestis.